Reading from the N-terminus, the 381-residue chain is Cobalt-precorrin-5B C(1)-methyltransferase (381 aa).

Belongs to the CbiD family.

It catalyses the reaction Co-precorrin-5B + S-adenosyl-L-methionine = Co-precorrin-6A + S-adenosyl-L-homocysteine. Its pathway is cofactor biosynthesis; adenosylcobalamin biosynthesis; cob(II)yrinate a,c-diamide from sirohydrochlorin (anaerobic route): step 6/10. In terms of biological role, catalyzes the methylation of C-1 in cobalt-precorrin-5B to form cobalt-precorrin-6A. The chain is Cobalt-precorrin-5B C(1)-methyltransferase from Prochlorococcus marinus (strain NATL2A).